Reading from the N-terminus, the 76-residue chain is Contulakin-G (76 aa).

The signal sequence occupies residues 1–22; it reads MQTAYWVMVMMMVWIAAPLSEG. A propeptide spanning residues 23 to 50 is cleaved from the precursor; sequence GKLNDVIRGLVPDDITPQLILGSLISRR. Pyrrolidone carboxylic acid is present on Gln51. A disordered region spans residues 51 to 76; sequence QSEEGGSNATKKPYILRASDQVASGP. Thr60 is a glycosylation site (O-linked (GalNAc...) threonine). A propeptide spanning residues 67 to 76 is cleaved from the precursor; the sequence is RASDQVASGP.

Belongs to the conotoxin C superfamily. Post-translationally, O-glycosylated. The glycosylation seems to enhance the affinity to the neurotensin receptors. Expressed by the venom duct.

It localises to the secreted. Acts as an agonist of neurotensin receptors. It binds to human neurotensin type 1 receptor (NTSR1), rat neurotensin types 1 and 2 receptors (NTSR1/NTSR2) and mouse neurotensin type 3 receptor (SORT1). The polypeptide is Contulakin-G (Conus geographus (Geography cone)).